The following is a 454-amino-acid chain: CBL-interacting protein kinase 17 (454 aa).

Residues 13-268 (YEMGRTLGEG…MAGIKSHEWF (256 aa)) form the Protein kinase domain. Residues 19-27 (LGEGNFGKV) and K42 each bind ATP. D136 functions as the Proton acceptor in the catalytic mechanism. Residues 154–183 (DFGLSALPQHLGNDGLLHTTCGSPNYIAPE) are activation loop. An NAF domain is found at 304–328 (KNSHQINAFQLIGMASSLDLSGFFE). The segment at 334–363 (QRRIRFTSTHPPKDAFDKIESSATELGFQV) is PPI.

Belongs to the protein kinase superfamily. CAMK Ser/Thr protein kinase family. SNF1 subfamily. It depends on Mn(2+) as a cofactor.

The catalysed reaction is L-seryl-[protein] + ATP = O-phospho-L-seryl-[protein] + ADP + H(+). The enzyme catalyses L-threonyl-[protein] + ATP = O-phospho-L-threonyl-[protein] + ADP + H(+). In terms of biological role, CIPK serine-threonine protein kinases interact with CBL proteins. Binding of a CBL protein to the regulatory NAF domain of CIPK protein lead to the activation of the kinase in a calcium-dependent manner. This Oryza sativa subsp. japonica (Rice) protein is CBL-interacting protein kinase 17 (CIPK17).